The primary structure comprises 356 residues: Tyrosine recombinase XerS (356 aa).

Positions 16–121 constitute a Core-binding (CB) domain; sequence IMPWYVLEYY…ALSSLYKYLT (106 aa). The Tyr recombinase domain maps to 169 to 354; sequence GFLTYIDQEY…VNDEQKNALD (186 aa). Catalysis depends on residues arginine 210, lysine 234, histidine 306, arginine 309, and histidine 332. Tyrosine 341 functions as the O-(3'-phospho-DNA)-tyrosine intermediate in the catalytic mechanism.

Belongs to the 'phage' integrase family. XerS subfamily.

The protein resides in the cytoplasm. FtsK is required for recombination. Functionally, site-specific tyrosine recombinase, which acts by catalyzing the cutting and rejoining of the recombining DNA molecules. Essential to convert dimers of the bacterial chromosome into monomers to permit their segregation at cell division. This Streptococcus pneumoniae (strain Hungary19A-6) protein is Tyrosine recombinase XerS.